Consider the following 1118-residue polypeptide: Repetin (1118 aa).

The segment at 1-91 (MPQLLNSILN…VQACHHKLDS (91 aa)) is S-100-like. EF-hand domains are found at residues 13–48 (KVFQDYAEYHGVGASLSKKELKQLLLTEFGDILRRP) and 49–84 (NDPETVETILEHLDRDRNGYVDFHEYLLLVFQLVQA). Ser27, Glu32, Asp62, Asp64, Asn66, Tyr68, and Glu73 together coordinate Ca(2+). The tract at residues 94–1118 (YGSRTSSQKE…YVQEQAAYQY (1025 aa)) is disordered. Residues 100 to 115 (SQKEHDQEGTRSHKFS) are compositionally biased toward basic and acidic residues. Over residues 138-148 (SEGQHQNVQHD) the composition is skewed to polar residues. Basic and acidic residues-rich tracts occupy residues 149–164 (QSQRQDKDSERHDTDP) and 172–186 (FHGDSHYGHSERQDT). Low complexity predominate over residues 237–252 (GQSKTSGQQSSHGQSG). The span at 259–299 (YSSQTSQQESDSYEQYGSQHQKSGNSQTERQGQNSQYGQTN) shows a compositional bias: polar residues. 48 tandem repeats follow at residues 273–284 (QYGSQHQKSGNS), 285–296 (QTERQGQNSQYG), 297–308 (QTNKKGHSSYHE), 309–320 (QTEGQGQSFHYG), 321–332 (QKGRKDQSFQQG), 333–344 (QKGRKDQSPHLG), 345–356 (QKGRQDQSPHRG), 357–368 (QKGRQDQSPHQG), 369–380 (QKGRQDQSPHRG), 381–392 (QKGRQDQSPHQG), 393–404 (QKGRQDQSPHLG), 405–416 (QKGRQDQSPHQG), 417–428 (QKGRQDQSPHQG), 429–440 (QKGRQDQSSHQG), 441–452 (QKGRQDQSSHQG), 453–464 (QKGRQDQSSHQG), 465–476 (QKGRQDQSSHQG), 477–488 (QREGQDQNSQWH), 489–500 (RTDSQGQSFHYG), 501–512 (QTGGHSLSSHQG), 513–524 (QTDSQGQNSNWH), 525–536 (RTDSQGQSFHYG), 537–548 (QTGGQGLSSHQG), 549–560 (QTDSQGQNSNWH), 561–572 (RTDSQGQSFHFD), 573–584 (QAGREVQGSHHG), 585–596 (QTDRQSQNSNWH), 597–608 (RTDSQGQSFHFD), 609–620 (QAGKEVQGSHQG), 621–632 (QTDSQGQSSHWH), 633–644 (QTDRQGQSSQQG), 645–656 (HKDRQGQNTHQG), 657–668 (QKGRQDLSPHQG), 669–680 (QKGRQDQSPHLG), 681–692 (QKGRHDQSPHQG), 693–704 (QKGRHDQSPHQG), 705–716 (QKGRQDLSSHQG), 717–728 (QKGRQDQSPHLG), 729–740 (QKGRHDQSPHRG), 741–752 (QKGRQDQSPHQG), 753–764 (QKGRQDQSSHQG), 765–776 (QREGQDQNSHWH), 777–788 (RTDRQGQSFHYG), 789–800 (QTGGQGLSSHQG), 801–812 (QTDSQGQNSQWH), 813–824 (RTDSQGQSFHFD), 825–836 (QAGREGQSSHHG), and 837–848 (QTDRQSQSSHCG). The segment at 273–848 (QYGSQHQKSG…DRQSQSSHCG (576 aa)) is 48 X 12 AA approximate tandem repeats of Q-[KT]-[GD]-[RS]-Q-[DG]-Q-S-[PS]-H-X-G. Positions 321 to 764 (QKGRKDQSFQ…GRQDQSSHQG (444 aa)) are 22 X 12 AA approximate tandem repeats of Q-K-G-R-Q-D-Q-S-P-H-Q-G. 2 stretches are compositionally biased toward basic and acidic residues: residues 347–363 (GRQDQSPHRGQKGRQDQ) and 371–387 (GRQDQSPHRGQKGRQDQ). Positions 434 to 466 (DQSSHQGQKGRQDQSSHQGQKGRQDQSSHQGQK) are enriched in polar residues. The segment covering 467-481 (GRQDQSSHQGQREGQ) has biased composition (basic and acidic residues). Polar residues-rich tracts occupy residues 482–535 (DQNS…SFHY) and 543–570 (LSSHQGQTDSQGQNSNWHRTDSQGQSFH). 2 stretches are compositionally biased toward polar residues: residues 587 to 606 (DRQSQNSNWHRTDSQGQSFH) and 616 to 643 (GSHQGQTDSQGQSSHWHQTDRQGQSSQQ). Over residues 710-726 (DLSSHQGQKGRQDQSPH) the composition is skewed to polar residues. 2 stretches are compositionally biased toward basic and acidic residues: residues 731-747 (GRHDQSPHRGQKGRQDQ) and 755-769 (GRQDQSSHQGQREGQ). Composition is skewed to polar residues over residues 795-822 (LSSHQGQTDSQGQNSQWHRTDSQGQSFH), 833-848 (SHHGQTDRQSQSSHCG), and 855-864 (TENQGQNRHS). The span at 865–875 (LGTDRTRRDSY) shows a compositional bias: basic and acidic residues. Residues 876-889 (VEQSGRSVKLSQQN) are compositionally biased toward polar residues. 5 stretches are compositionally biased toward basic and acidic residues: residues 890–908 (SREEVRQTQSQRSHDRREQ), 947–965 (EQDHCGEEEYQDWDRHSVE), 978–998 (THEEEQSHQTSDRQTHVDEQN), 1005–1045 (QTHE…KEKY), and 1056–1065 (PNREKSHMSE).

The protein belongs to the S100-fused protein family. Post-translationally, potential substrate of transglutaminase. Some arginines are probably converted to citrullines by peptidylarginine deimidase. As to expression, detectable in the stratified internal epithelia of forestomach and tongue and to a lesser degree in normal skin epidermis, where it is restricted to the differentiated suprabasal cell layers. Overexpressed in skin tumors.

The protein resides in the secreted. It is found in the extracellular space. Its subcellular location is the extracellular matrix. In terms of biological role, involved in the cornified cell envelope formation. Multifunctional epidermal matrix protein. The chain is Repetin (Rptn) from Mus musculus (Mouse).